A 347-amino-acid chain; its full sequence is uncharacterized protein (347 aa).

This is an uncharacterized protein from Saccharomyces cerevisiae (strain ATCC 204508 / S288c) (Baker's yeast).